The primary structure comprises 229 residues: ADP-ribosylation factor-like protein 6-interacting protein 4 (229 aa).

The segment covering 1–20 (MAHVGSRKRSRSRSRSRSGR) has biased composition (basic residues). Residues 1-152 (MAHVGSRKRS…EDNDGPVLTD (152 aa)) form a disordered region. A compositionally biased stretch (basic and acidic residues) spans 21 to 35 (RGSEKRSKRSSKDAS). Over residues 66 to 87 (SRSSSTSSSSSSSSSASSSSSS) the composition is skewed to low complexity. Over residues 90 to 117 (RKKRAKHKEKKRKKKKKKRKKKLKKRVK) the composition is skewed to basic residues. Residues Ser-140 and Ser-174 each carry the phosphoserine modification. Lys-191 is covalently cross-linked (Glycyl lysine isopeptide (Lys-Gly) (interchain with G-Cter in SUMO2)).

The protein belongs to the ARL6IP4 family. In terms of assembly, interacts with ZCCHC17. Interacts with SRSF2. Interacts with ARL6. As to expression, widely expressed. Expressed at high level in testis and thymus.

It is found in the nucleus. The protein resides in the nucleolus. Its subcellular location is the nucleus speckle. In terms of biological role, involved in modulating alternative pre-mRNA splicing with either 5' distal site activation or preferential use of 3' proximal site. This Mus musculus (Mouse) protein is ADP-ribosylation factor-like protein 6-interacting protein 4 (Arl6ip4).